A 78-amino-acid chain; its full sequence is Defensin-like protein 171 (78 aa).

Positions 1 to 23 (MAKTASSLVLPIIFLVMFALVEQ) are cleaved as a signal peptide. 4 disulfides stabilise this stretch: cysteine 27–cysteine 71, cysteine 34–cysteine 56, cysteine 40–cysteine 65, and cysteine 44–cysteine 67.

Belongs to the DEFL family.

The protein localises to the secreted. This Arabidopsis thaliana (Mouse-ear cress) protein is Defensin-like protein 171 (LCR61).